The following is a 317-amino-acid chain: Beta-ketoacyl-[acyl-carrier-protein] synthase III (317 aa).

Residues Cys-112 and His-244 contribute to the active site. The segment at 245-249 (QANIR) is ACP-binding. Residue Asn-274 is part of the active site.

The protein belongs to the thiolase-like superfamily. FabH family. As to quaternary structure, homodimer.

The protein localises to the cytoplasm. The catalysed reaction is malonyl-[ACP] + acetyl-CoA + H(+) = 3-oxobutanoyl-[ACP] + CO2 + CoA. Its pathway is lipid metabolism; fatty acid biosynthesis. Functionally, catalyzes the condensation reaction of fatty acid synthesis by the addition to an acyl acceptor of two carbons from malonyl-ACP. Catalyzes the first condensation reaction which initiates fatty acid synthesis and may therefore play a role in governing the total rate of fatty acid production. Possesses both acetoacetyl-ACP synthase and acetyl transacylase activities. Its substrate specificity determines the biosynthesis of branched-chain and/or straight-chain of fatty acids. The sequence is that of Beta-ketoacyl-[acyl-carrier-protein] synthase III from Rickettsia typhi (strain ATCC VR-144 / Wilmington).